Reading from the N-terminus, the 323-residue chain is uncharacterized protein (323 aa).

This is an uncharacterized protein from Treponema pallidum (strain Nichols).